We begin with the raw amino-acid sequence, 590 residues long: MTLHNNSTTSPLFPNISSSWIHSPSDAGLPPGTDTHFGSYNVSRAAGNFSSPDGTTDDPLGGHTVWQVVFIAFLTGILALVTIIGNILVIVSFKVNKQLKTVNNYFLLSLACADLIIGVISMNLFTTYIIMNRWALGNLACDLWLAIDYVASNASVMNLLVISFDRYFSITRPLTYRAKRTTKRAGVMIGLAWVISFVLWAPAILFWQYFVGKRTVPPGECFIQFLSEPTITFGTAIAAFYMPVTIMTILYWRIYKETEKRTKELAGLQASGTEAETENFVHPTGSSRSCSSYELQQQSMKRSNRRKYGRCHFWFTTKSWKPSSEQMDQDHSSSDSWNNNDAAASLENSASSDEEDIGSETRAIYSIVLKLPGHSTILNSTKLPSSDNLQVPEEELGMVDLERKADKLQAQKSVDDGGSFPKSFSKLPIQLESAVDTAKTSDVNSSVGKSTATLPLSFKEATLAKRFALKTRSQITKRKRMSLVKEKKAAQTLSAILLAFIITWTPYNIMVLVNTFCDSCIPKTFWNLGYWLCYINSTVNPVCYALCNKTFRTTFKMLLLCQCGKKKRRKQQYQQRQSVIFHKRAPEQAL.

The Extracellular segment spans residues 1 to 67; it reads MTLHNNSTTS…DPLGGHTVWQ (67 aa). N-linked (GlcNAc...) asparagine glycosylation is found at asparagine 5, asparagine 6, asparagine 15, asparagine 41, and asparagine 48. A helical transmembrane segment spans residues 68-91; sequence VVFIAFLTGILALVTIIGNILVIV. The Cytoplasmic portion of the chain corresponds to 92-104; sequence SFKVNKQLKTVNN. Residues 105 to 130 traverse the membrane as a helical segment; that stretch reads YFLLSLACADLIIGVISMNLFTTYII. Topologically, residues 131–142 are extracellular; it reads MNRWALGNLACD. Cysteine 141 and cysteine 221 are disulfide-bonded. The helical transmembrane segment at 143-164 threads the bilayer; it reads LWLAIDYVASNASVMNLLVISF. At 165 to 184 the chain is on the cytoplasmic side; that stretch reads DRYFSITRPLTYRAKRTTKR. Residues 185–206 traverse the membrane as a helical segment; sequence AGVMIGLAWVISFVLWAPAILF. The Extracellular segment spans residues 207–229; the sequence is WQYFVGKRTVPPGECFIQFLSEP. A helical transmembrane segment spans residues 230 to 252; it reads TITFGTAIAAFYMPVTIMTILYW. Over 253-491 the chain is Cytoplasmic; sequence RIYKETEKRT…SLVKEKKAAQ (239 aa). The Basolateral sorting signal motif lies at 275 to 281; sequence AETENFV. The tract at residues 323-357 is disordered; that stretch reads SSEQMDQDHSSSDSWNNNDAAASLENSASSDEEDI. Positions 334–345 are enriched in low complexity; the sequence is SDSWNNNDAAAS. Serine 385 is subject to Phosphoserine. The helical transmembrane segment at 492–514 threads the bilayer; it reads TLSAILLAFIITWTPYNIMVLVN. Topologically, residues 515-526 are extracellular; the sequence is TFCDSCIPKTFW. Cysteine 517 and cysteine 520 are oxidised to a cystine. The chain crosses the membrane as a helical span at residues 527–546; the sequence is NLGYWLCYINSTVNPVCYAL. The Cytoplasmic segment spans residues 547 to 590; it reads CNKTFRTTFKMLLLCQCGKKKRRKQQYQQRQSVIFHKRAPEQAL.

It belongs to the G-protein coupled receptor 1 family. Muscarinic acetylcholine receptor subfamily. CHRM3 sub-subfamily. Homodimer; the dimers can form tetramers. Interacts with NALCN. Interacts with TMEM147.

Its subcellular location is the cell membrane. It is found in the postsynaptic cell membrane. It localises to the basolateral cell membrane. The protein localises to the endoplasmic reticulum membrane. The muscarinic acetylcholine receptor mediates various cellular responses, including inhibition of adenylate cyclase, breakdown of phosphoinositides and modulation of potassium channels through the action of G proteins. Primary transducing effect is Pi turnover. This chain is Muscarinic acetylcholine receptor M3 (CHRM3), found in Gorilla gorilla gorilla (Western lowland gorilla).